The following is a 333-amino-acid chain: N-acetyl-gamma-glutamyl-phosphate reductase (333 aa).

Cysteine 145 is an active-site residue.

The protein belongs to the NAGSA dehydrogenase family. Type 1 subfamily.

The protein localises to the cytoplasm. The catalysed reaction is N-acetyl-L-glutamate 5-semialdehyde + phosphate + NADP(+) = N-acetyl-L-glutamyl 5-phosphate + NADPH + H(+). Its pathway is amino-acid biosynthesis; L-arginine biosynthesis; N(2)-acetyl-L-ornithine from L-glutamate: step 3/4. In terms of biological role, catalyzes the NADPH-dependent reduction of N-acetyl-5-glutamyl phosphate to yield N-acetyl-L-glutamate 5-semialdehyde. The protein is N-acetyl-gamma-glutamyl-phosphate reductase of Salinispora arenicola (strain CNS-205).